We begin with the raw amino-acid sequence, 487 residues long: Cobyric acid synthase (487 aa).

Positions 248–435 constitute a GATase cobBQ-type domain; it reads VLKVIVPVLP…LHGLFEGSQS (188 aa). Cys-329 acts as the Nucleophile in catalysis. His-427 is a catalytic residue.

Belongs to the CobB/CobQ family. CobQ subfamily.

The protein operates within cofactor biosynthesis; adenosylcobalamin biosynthesis. Catalyzes amidations at positions B, D, E, and G on adenosylcobyrinic A,C-diamide. NH(2) groups are provided by glutamine, and one molecule of ATP is hydrogenolyzed for each amidation. This Pseudomonas entomophila (strain L48) protein is Cobyric acid synthase.